The chain runs to 415 residues: Multifunctional CCA protein (415 aa).

Glycine 8 and arginine 11 together coordinate ATP. Residues glycine 8 and arginine 11 each coordinate CTP. Positions 21 and 23 each coordinate Mg(2+). The ATP site is built by arginine 91, arginine 137, and arginine 140. 3 residues coordinate CTP: arginine 91, arginine 137, and arginine 140. Residues 228-329 form the HD domain; it reads AGTHTLMALD…VELFEGLDLF (102 aa).

It belongs to the tRNA nucleotidyltransferase/poly(A) polymerase family. Bacterial CCA-adding enzyme type 1 subfamily. In terms of assembly, monomer. Can also form homodimers and oligomers. The cofactor is Mg(2+). It depends on Ni(2+) as a cofactor.

It catalyses the reaction a tRNA precursor + 2 CTP + ATP = a tRNA with a 3' CCA end + 3 diphosphate. The enzyme catalyses a tRNA with a 3' CCA end + 2 CTP + ATP = a tRNA with a 3' CCACCA end + 3 diphosphate. Functionally, catalyzes the addition and repair of the essential 3'-terminal CCA sequence in tRNAs without using a nucleic acid template. Adds these three nucleotides in the order of C, C, and A to the tRNA nucleotide-73, using CTP and ATP as substrates and producing inorganic pyrophosphate. tRNA 3'-terminal CCA addition is required both for tRNA processing and repair. Also involved in tRNA surveillance by mediating tandem CCA addition to generate a CCACCA at the 3' terminus of unstable tRNAs. While stable tRNAs receive only 3'-terminal CCA, unstable tRNAs are marked with CCACCA and rapidly degraded. The sequence is that of Multifunctional CCA protein from Halorhodospira halophila (strain DSM 244 / SL1) (Ectothiorhodospira halophila (strain DSM 244 / SL1)).